The sequence spans 361 residues: Spermidine/putrescine import ATP-binding protein PotA (361 aa).

The ABC transporter domain maps to 4-234; the sequence is LELRDVTRRF…PANRFIADFI (231 aa). 36 to 43 lines the ATP pocket; it reads GPSGCGKT.

Belongs to the ABC transporter superfamily. Spermidine/putrescine importer (TC 3.A.1.11.1) family. In terms of assembly, the complex is composed of two ATP-binding proteins (PotA), two transmembrane proteins (PotB and PotC) and a solute-binding protein (PotD).

Its subcellular location is the cell inner membrane. It catalyses the reaction ATP + H2O + polyamine-[polyamine-binding protein]Side 1 = ADP + phosphate + polyamineSide 2 + [polyamine-binding protein]Side 1.. Functionally, part of the ABC transporter complex PotABCD involved in spermidine/putrescine import. Responsible for energy coupling to the transport system. The protein is Spermidine/putrescine import ATP-binding protein PotA of Nitrosomonas europaea (strain ATCC 19718 / CIP 103999 / KCTC 2705 / NBRC 14298).